The chain runs to 380 residues: Beta sliding clamp (380 aa).

This sequence belongs to the beta sliding clamp family. As to quaternary structure, forms a ring-shaped head-to-tail homodimer around DNA which binds and tethers DNA polymerases and other proteins to the DNA. The DNA replisome complex has a single clamp-loading complex (3 tau and 1 each of delta, delta', psi and chi subunits) which binds 3 Pol III cores (1 core on the leading strand and 2 on the lagging strand) each with a beta sliding clamp dimer. Additional proteins in the replisome are other copies of gamma, psi and chi, Ssb, DNA helicase and RNA primase.

The protein resides in the cytoplasm. Its function is as follows. Confers DNA tethering and processivity to DNA polymerases and other proteins. Acts as a clamp, forming a ring around DNA (a reaction catalyzed by the clamp-loading complex) which diffuses in an ATP-independent manner freely and bidirectionally along dsDNA. Initially characterized for its ability to contact the catalytic subunit of DNA polymerase III (Pol III), a complex, multichain enzyme responsible for most of the replicative synthesis in bacteria; Pol III exhibits 3'-5' exonuclease proofreading activity. The beta chain is required for initiation of replication as well as for processivity of DNA replication. The chain is Beta sliding clamp (dnaN) from Halalkalibacterium halodurans (strain ATCC BAA-125 / DSM 18197 / FERM 7344 / JCM 9153 / C-125) (Bacillus halodurans).